The chain runs to 133 residues: Classical arabinogalactan protein 5 (133 aa).

Residues 1-21 form the signal peptide; sequence MASKSVVVFLFLALVASSVVA. Pyrrolidone carboxylic acid is present on Gln-22. Positions 23–110 are disordered; sequence APGPAPTISP…QSPLSGSPNA (88 aa). A compositionally biased stretch (pro residues) spans 25 to 37; sequence GPAPTISPLPATP. Over residues 38-48 the composition is skewed to low complexity; the sequence is TPSQSPRATAP. Positions 49–81 are enriched in pro residues; that stretch reads APSPSANPPPSAPTTAPPVSQPPTESPPAPPTS. Asn-109 carries the GPI-anchor amidated asparagine lipid modification. The propeptide at 110-133 is removed in mature form; the sequence is AAAVSRVSLVGTFAGVAVIAALLL.

It belongs to the classical AGP family. Post-translationally, O-glycosylated on the hydroxyproline residues. In terms of tissue distribution, expressed at a low level in flowers and siliques.

The protein resides in the cell membrane. Its function is as follows. Proteoglycan that seems to be implicated in diverse developmental roles such as differentiation, cell-cell recognition, embryogenesis and programmed cell death. The protein is Classical arabinogalactan protein 5 (AGP5) of Arabidopsis thaliana (Mouse-ear cress).